The primary structure comprises 234 residues: Orotidine 5'-phosphate decarboxylase (234 aa).

Substrate-binding positions include D11, K33, 60–69, T120, R181, Q190, G210, and R211; that span reads DLKFHDIPNT. Residue K62 is the Proton donor of the active site.

The protein belongs to the OMP decarboxylase family. Type 1 subfamily. Homodimer.

The catalysed reaction is orotidine 5'-phosphate + H(+) = UMP + CO2. It functions in the pathway pyrimidine metabolism; UMP biosynthesis via de novo pathway; UMP from orotate: step 2/2. In terms of biological role, catalyzes the decarboxylation of orotidine 5'-monophosphate (OMP) to uridine 5'-monophosphate (UMP). This Aliivibrio fischeri (strain ATCC 700601 / ES114) (Vibrio fischeri) protein is Orotidine 5'-phosphate decarboxylase.